The chain runs to 341 residues: Glycerol-3-phosphate dehydrogenase [NAD(P)+] (341 aa).

4 residues coordinate NADPH: Ser14, Phe15, Arg35, and Lys108. Sn-glycerol 3-phosphate contacts are provided by Lys108 and Gly136. Ala140 provides a ligand contact to NADPH. Lys191, Asp244, Ser254, Arg255, and Asn256 together coordinate sn-glycerol 3-phosphate. Residue Lys191 is the Proton acceptor of the active site. An NADPH-binding site is contributed by Arg255. The NADPH site is built by Val279 and Glu281.

Belongs to the NAD-dependent glycerol-3-phosphate dehydrogenase family.

It localises to the cytoplasm. It carries out the reaction sn-glycerol 3-phosphate + NAD(+) = dihydroxyacetone phosphate + NADH + H(+). The enzyme catalyses sn-glycerol 3-phosphate + NADP(+) = dihydroxyacetone phosphate + NADPH + H(+). It participates in membrane lipid metabolism; glycerophospholipid metabolism. Catalyzes the reduction of the glycolytic intermediate dihydroxyacetone phosphate (DHAP) to sn-glycerol 3-phosphate (G3P), the key precursor for phospholipid synthesis. The chain is Glycerol-3-phosphate dehydrogenase [NAD(P)+] from Pseudomonas syringae pv. tomato (strain ATCC BAA-871 / DC3000).